The following is a 1073-amino-acid chain: Semaphorin-6D (1073 aa).

A signal peptide spans 1–20 (MRVFLLCAYILLLMVSQLRA). The Extracellular portion of the chain corresponds to 21–662 (VSFPEDDEPL…GESNQMVHMN (642 aa)). In terms of domain architecture, Sema spans 27-512 (DEPLNTVDYH…FSSCIIRIPL (486 aa)). An N-linked (GlcNAc...) asparagine glycan is attached at Asn-51. Cystine bridges form between Cys-108/Cys-118, Cys-136/Cys-145, Cys-259/Cys-370, and Cys-284/Cys-329. A glycan (N-linked (GlcNAc...) asparagine) is linked at Asn-283. Asn-435 and Asn-461 each carry an N-linked (GlcNAc...) asparagine glycan. 4 disulfide bridges follow: Cys-477–Cys-506, Cys-515–Cys-533, Cys-521–Cys-568, and Cys-525–Cys-541. The PSI domain occupies 514–569 (RCERYGSCKKSCIASRDPYCGWLSQGSCGRVTPGMLAEGYEQDTEFGNTAHLGDCH). An N-linked (GlcNAc...) asparagine glycan is attached at Asn-631. The chain crosses the membrane as a helical span at residues 663-683 (VLITCVFAAFVLGAFIAGVAV). At 684 to 1073 (YCYRDMFVRK…SVRPLNKYTY (390 aa)) the chain is on the cytoplasmic side. 3 positions are modified to phosphoserine: Ser-723, Ser-734, and Ser-744. Disordered stretches follow at residues 744–775 (SRKELPPNGDTKSMVMDHRGQPPELAALPTPE), 787–825 (AMKSHSEKAHGHGASRKETPQFFPSSPPPHSPLSHGHIP), 839–874 (TSFSNSNAHKAEKKLQNIDHPLTKSSSKRDHRRSVD), 914–1005 (SMSE…PTPT), and 1021–1073 (LQPS…KYTY). Thr-773 carries the phosphothreonine modification. Positions 790–805 (SHSEKAHGHGASRKET) are enriched in basic and acidic residues. Phosphoserine is present on residues Ser-931, Ser-957, and Ser-983. Over residues 931–942 (SPPSTLPRNSPT) the composition is skewed to polar residues. Polar residues-rich tracts occupy residues 980–995 (NLNSPNGVLLSRQPSM) and 1021–1037 (LQPSLSRQSSYTSNGTL).

It belongs to the semaphorin family.

It localises to the cell membrane. Its subcellular location is the cytoplasm. In terms of biological role, shows growth cone collapsing activity on dorsal root ganglion (DRG) neurons in vitro. May be a stop signal for the DRG neurons in their target areas, and possibly also for other neurons. May also be involved in the maintenance and remodeling of neuronal connections. Ligand of TREM2 with PLXNA1 as coreceptor in dendritic cells, plays a role in the generation of immune responses and skeletal homeostasis. The polypeptide is Semaphorin-6D (Homo sapiens (Human)).